The following is a 463-amino-acid chain: Metacaspase-1 (463 aa).

The tract at residues 1–149 (MSWNQYPGGG…PQLQGQGGQS (149 aa)) is disordered. The segment covering 7-18 (PGGGHHQQGGYG) has biased composition (gly residues). Pro residues predominate over residues 20 to 56 (RPPPPQWAQQGPPPPPNMGYRPPPPPQAYYNNPPPPQ). The span at 57–83 (QYQRPAPQQNGYQQGGYQQQQQSQGNY) shows a compositional bias: low complexity. Active-site residues include His247 and Cys309.

Belongs to the peptidase C14B family.

Functionally, involved in cell death (apoptosis). The polypeptide is Metacaspase-1 (MCA1) (Cryptococcus neoformans var. neoformans serotype D (strain B-3501A) (Filobasidiella neoformans)).